A 408-amino-acid chain; its full sequence is Peptidase T (408 aa).

H78 is a Zn(2+) binding site. D80 is a catalytic residue. D140 provides a ligand contact to Zn(2+). Catalysis depends on E173, which acts as the Proton acceptor. Zn(2+)-binding residues include E174, D196, and H379.

Belongs to the peptidase M20B family. The cofactor is Zn(2+).

Its subcellular location is the cytoplasm. The catalysed reaction is Release of the N-terminal residue from a tripeptide.. In terms of biological role, cleaves the N-terminal amino acid of tripeptides. This chain is Peptidase T, found in Shigella flexneri serotype 5b (strain 8401).